A 259-amino-acid polypeptide reads, in one-letter code: 12alpha-hydroxysteroid dehydrogenase (259 aa).

Y162 (proton acceptor) is an active-site residue.

This sequence belongs to the short-chain dehydrogenases/reductases (SDR) family. Homotetramer.

It catalyses the reaction cholate + NADP(+) = 3alpha,7alpha-dihydroxy-12-oxo-5beta-cholanate + NADPH + H(+). It carries out the reaction deoxycholate + NADP(+) = 12-dehydrodeoxycholate + NADPH + H(+). Functionally, catalyzes the oxidation of the 12alpha-hydroxy group of bile acids, like cholate and deoxycholate. Is also able to catalyze the reverse reaction in vitro. Is likely involved in an epimerization pathway of bile acids that converts hydroxy groups from alpha to beta positions via stable oxo-intermediates, which occurs in the human gut. The chain is 12alpha-hydroxysteroid dehydrogenase from Clostridium sp. (strain ATCC 29733 / VPI C48-50).